Here is a 200-residue protein sequence, read N- to C-terminus: HVA22-like protein k (200 aa).

A disordered region spans residues 176–200 (LGEIANGSPVSETNSDSESDSNHED).

The protein belongs to the DP1 family.

This is HVA22-like protein k (HVA22K) from Arabidopsis thaliana (Mouse-ear cress).